A 242-amino-acid chain; its full sequence is Ribosomal RNA small subunit methyltransferase G (242 aa).

Residues Gly81, Phe86, 104 to 106 (DST), 132 to 133 (AE), and Arg151 each bind S-adenosyl-L-methionine.

Belongs to the methyltransferase superfamily. RNA methyltransferase RsmG family.

The protein resides in the cytoplasm. Specifically methylates the N7 position of a guanine in 16S rRNA. In Synechococcus elongatus (strain ATCC 33912 / PCC 7942 / FACHB-805) (Anacystis nidulans R2), this protein is Ribosomal RNA small subunit methyltransferase G.